The following is a 4538-amino-acid chain: Polyketide synthase PksL (4538 aa).

The segment at 1–123 (MRWRSNVKKI…ADMHADSPAI (123 aa)) is N-terminal hotdog fold 1. The PKS/mFAS DH 1 domain occupies 1-285 (MRWRSNVKKI…SKLVREAELI (285 aa)). Histidine 26 serves as the catalytic Proton acceptor; for dehydratase activity 1. The interval 138 to 285 (QNVVQLDDVY…SKLVREAELI (148 aa)) is C-terminal hotdog fold 1. Aspartate 199 (proton donor; for dehydratase activity 1) is an active-site residue. Residues 289–314 (HQDAQETQMTRADTAERDKPADMVSS) form a disordered region. The 75-residue stretch at 320 to 394 (SEAEQFVSQL…ELSAFLAEEY (75 aa)) folds into the Carrier 1 domain. Serine 354 carries the O-(pantetheine 4'-phosphoryl)serine modification. The Ketosynthase family 3 (KS3) 1 domain occupies 433–871 (AGDIAIIGLA…GSNAHIILEE (439 aa)). Catalysis depends on for beta-ketoacyl synthase 1 activity residues cysteine 609, histidine 744, and histidine 784. Residues 1048-1226 (HILHPLLHQN…DSLYAGENGV (179 aa)) form a dehydratase region. An N-terminal hotdog fold 2 region spans residues 1051-1175 (HPLLHQNVSD…GSAVLCEAGE (125 aa)). Positions 1051–1340 (HPLLHQNVSD…ARVLETDQEG (290 aa)) constitute a PKS/mFAS DH 2 domain. The active-site Proton acceptor; for dehydratase activity 2 is the histidine 1080. Residues 1189–1340 (NGRTLSPFDC…ARVLETDQEG (152 aa)) are C-terminal hotdog fold 2. The active-site Proton donor; for dehydratase activity 2 is the aspartate 1251. The interval 1520–1713 (KGVYLITGGA…WKDGGMQIDA (194 aa)) is beta-ketoacyl reductase 1. Residues 1800–1873 (EKAENYFKQV…SLTRYFIDSR (74 aa)) form the Carrier 2 domain. An O-(pantetheine 4'-phosphoryl)serine modification is found at serine 1834. In terms of domain architecture, Ketosynthase family 3 (KS3) 2 spans 1926–2365 (TEEIAIIGIS…GVNAHILIEE (440 aa)). Active-site for beta-ketoacyl synthase 2 activity residues include cysteine 2103, histidine 2238, and histidine 2278. The segment at 2546 to 2568 (TEEPFAPVQPVIPKPSVDREASG) is disordered. 2 Carrier domains span residues 2597–2674 (ITAE…AHEL) and 2738–2815 (VAIE…KSEL). 2 positions are modified to O-(pantetheine 4'-phosphoryl)serine: serine 2634 and serine 2775. The segment at 2828-2854 (SFEAAQQKPAASSHPKPAERPLQPVQH) is disordered. The Ketosynthase family 3 (KS3) 3 domain maps to 2873–3294 (EDAIAIVGMS…GTNAHIVIEE (422 aa)). Catalysis depends on for beta-ketoacyl synthase 3 activity residues cysteine 3040, histidine 3175, and histidine 3215. The segment at 3686–3887 (DKVLLITGGT…PNWKETGLGE (202 aa)) is beta-ketoacyl reductase 2. Residues 3960–4037 (NLFPETVDWL…SFAHWLISKY (78 aa)) form the Carrier 5 domain. The residue at position 3997 (serine 3997) is an O-(pantetheine 4'-phosphoryl)serine. Residues 4082 to 4485 (AEDIAIIGLS…GTNAHLIIEG (404 aa)) enclose the Ketosynthase family 3 (KS3) 4 domain. The active-site For beta-ketoacyl synthase 4 activity is the cysteine 4237.

Pantetheine 4'-phosphate is required as a cofactor.

It localises to the cytoplasm. It participates in antibiotic biosynthesis; bacillaene biosynthesis. In terms of biological role, involved in some intermediate steps for the synthesis of the antibiotic polyketide bacillaene which is involved in secondary metabolism. The protein is Polyketide synthase PksL (pksL) of Bacillus subtilis (strain 168).